Reading from the N-terminus, the 199-residue chain is Dephospho-CoA kinase (199 aa).

The DPCK domain occupies 11-199; the sequence is RIGLTGGIAS…DLHDQLDALL (189 aa). 19 to 24 contributes to the ATP binding site; sequence ASGKSS.

The protein belongs to the CoaE family.

Its subcellular location is the cytoplasm. The catalysed reaction is 3'-dephospho-CoA + ATP = ADP + CoA + H(+). It participates in cofactor biosynthesis; coenzyme A biosynthesis; CoA from (R)-pantothenate: step 5/5. Functionally, catalyzes the phosphorylation of the 3'-hydroxyl group of dephosphocoenzyme A to form coenzyme A. In Synechococcus sp. (strain CC9902), this protein is Dephospho-CoA kinase.